The sequence spans 223 residues: UPF0758 protein Tgr7_0100 (223 aa).

The MPN domain maps to 102 to 223 (ALTSPDDTRR…LVSFAERGLL (122 aa)). Residues histidine 173, histidine 175, and aspartate 186 each coordinate Zn(2+). The JAMM motif motif lies at 173–186 (HNHPSGVAEPSRSD).

Belongs to the UPF0758 family.

This is UPF0758 protein Tgr7_0100 from Thioalkalivibrio sulfidiphilus (strain HL-EbGR7).